A 228-amino-acid chain; its full sequence is Sec-independent protein translocase protein TatB (228 aa).

Residues 1-21 (MFDFGLGELVFVGIIALIVLG) traverse the membrane as a helical segment. 2 disordered regions span residues 126 to 162 (LSDG…AETD) and 196 to 228 (VPHT…VRKS). Over residues 206–228 (AISRKRGLRPKHRAKPKLRVRKS) the composition is skewed to basic residues.

Belongs to the TatB family. As to quaternary structure, the Tat system comprises two distinct complexes: a TatABC complex, containing multiple copies of TatA, TatB and TatC subunits, and a separate TatA complex, containing only TatA subunits. Substrates initially bind to the TatABC complex, which probably triggers association of the separate TatA complex to form the active translocon.

The protein localises to the cell inner membrane. In terms of biological role, part of the twin-arginine translocation (Tat) system that transports large folded proteins containing a characteristic twin-arginine motif in their signal peptide across membranes. Together with TatC, TatB is part of a receptor directly interacting with Tat signal peptides. TatB may form an oligomeric binding site that transiently accommodates folded Tat precursor proteins before their translocation. The chain is Sec-independent protein translocase protein TatB from Neisseria meningitidis serogroup C / serotype 2a (strain ATCC 700532 / DSM 15464 / FAM18).